The primary structure comprises 97 residues: Ferredoxin-like protein YdiT (97 aa).

Belongs to the bacterial-type ferredoxin family. FixX subfamily.

Its function is as follows. Could be a 3Fe-4S cluster-containing protein. Probably participates in a redox process with YdiQ, YdiR and YdiS. This Escherichia coli (strain K12) protein is Ferredoxin-like protein YdiT (ydiT).